Consider the following 273-residue polypeptide: 4-hydroxy-tetrahydrodipicolinate reductase (273 aa).

Residues 11-16 (GALGRM) and 106-108 (GTT) contribute to the NAD(+) site. The active-site Proton donor/acceptor is His162. His163 is a binding site for (S)-2,3,4,5-tetrahydrodipicolinate. Catalysis depends on Lys166, which acts as the Proton donor. 172–173 (GT) serves as a coordination point for (S)-2,3,4,5-tetrahydrodipicolinate.

The protein belongs to the DapB family.

The protein resides in the cytoplasm. The catalysed reaction is (S)-2,3,4,5-tetrahydrodipicolinate + NAD(+) + H2O = (2S,4S)-4-hydroxy-2,3,4,5-tetrahydrodipicolinate + NADH + H(+). It catalyses the reaction (S)-2,3,4,5-tetrahydrodipicolinate + NADP(+) + H2O = (2S,4S)-4-hydroxy-2,3,4,5-tetrahydrodipicolinate + NADPH + H(+). It functions in the pathway amino-acid biosynthesis; L-lysine biosynthesis via DAP pathway; (S)-tetrahydrodipicolinate from L-aspartate: step 4/4. In terms of biological role, catalyzes the conversion of 4-hydroxy-tetrahydrodipicolinate (HTPA) to tetrahydrodipicolinate. The protein is 4-hydroxy-tetrahydrodipicolinate reductase of Synechococcus sp. (strain RCC307).